Reading from the N-terminus, the 336-residue chain is Anthranilate phosphoribosyltransferase (336 aa).

Residues Gly82, 85 to 86 (GD), Thr90, 92 to 95 (NIST), 110 to 118 (KHGNRFASG), and Ser122 contribute to the 5-phospho-alpha-D-ribose 1-diphosphate site. Gly82 is an anthranilate binding site. Ser94 contributes to the Mg(2+) binding site. Asn113 serves as a coordination point for anthranilate. An anthranilate-binding site is contributed by Arg168. Residues Asp227 and Glu228 each contribute to the Mg(2+) site.

It belongs to the anthranilate phosphoribosyltransferase family. In terms of assembly, homodimer. Requires Mg(2+) as cofactor.

The enzyme catalyses N-(5-phospho-beta-D-ribosyl)anthranilate + diphosphate = 5-phospho-alpha-D-ribose 1-diphosphate + anthranilate. Its pathway is amino-acid biosynthesis; L-tryptophan biosynthesis; L-tryptophan from chorismate: step 2/5. Functionally, catalyzes the transfer of the phosphoribosyl group of 5-phosphorylribose-1-pyrophosphate (PRPP) to anthranilate to yield N-(5'-phosphoribosyl)-anthranilate (PRA). This chain is Anthranilate phosphoribosyltransferase, found in Desulfitobacterium hafniense (strain DSM 10664 / DCB-2).